The chain runs to 298 residues: Protease HtpX homolog (298 aa).

2 consecutive transmembrane segments (helical) span residues 15 to 35 and 39 to 59; these read LIMVLFVVILTLVGAGLGYLF and PWMGIIIALAGSLIYLLIMWQ. Residue His143 coordinates Zn(2+). Glu144 is an active-site residue. His147 lines the Zn(2+) pocket. The next 2 membrane-spanning stretches (helical) occupy residues 153 to 173 and 197 to 217; these read ILLSTIAVVLVGVISFISGMA and MIFKVVAIVFVLILGPLSASL. Glu227 is a binding site for Zn(2+).

This sequence belongs to the peptidase M48B family. Requires Zn(2+) as cofactor.

Its subcellular location is the cell membrane. This is Protease HtpX homolog from Lactobacillus helveticus (strain DPC 4571).